The sequence spans 286 residues: Bifunctional protein FolD (286 aa).

NADP(+) is bound by residues 166-168 and isoleucine 232; that span reads GAS.

The protein belongs to the tetrahydrofolate dehydrogenase/cyclohydrolase family. In terms of assembly, homodimer.

It catalyses the reaction (6R)-5,10-methylene-5,6,7,8-tetrahydrofolate + NADP(+) = (6R)-5,10-methenyltetrahydrofolate + NADPH. The enzyme catalyses (6R)-5,10-methenyltetrahydrofolate + H2O = (6R)-10-formyltetrahydrofolate + H(+). The protein operates within one-carbon metabolism; tetrahydrofolate interconversion. Its function is as follows. Catalyzes the oxidation of 5,10-methylenetetrahydrofolate to 5,10-methenyltetrahydrofolate and then the hydrolysis of 5,10-methenyltetrahydrofolate to 10-formyltetrahydrofolate. This is Bifunctional protein FolD from Shewanella woodyi (strain ATCC 51908 / MS32).